Reading from the N-terminus, the 274-residue chain is uncharacterized protein (274 aa).

The protein belongs to the class IV-like SAM-binding methyltransferase superfamily. RNA methyltransferase TrmH family.

This is an uncharacterized protein from Synechocystis sp. (strain ATCC 27184 / PCC 6803 / Kazusa).